The primary structure comprises 448 residues: Zinc finger and BTB domain-containing protein 44 (448 aa).

Residues 31-98 (CDITIRVQDK…AYTATLSINT (68 aa)) enclose the BTB domain. Residues 289–298 (LSDEEVHEEV) show a composition bias toward basic and acidic residues. The interval 289–320 (LSDEEVHEEVSQPVSASQSSMSDQQTVPGSEQ) is disordered. The segment covering 299-313 (SQPVSASQSSMSDQQ) has biased composition (low complexity). C2H2-type zinc fingers lie at residues 394–416 (FQCP…MLIH) and 422–444 (FQCD…RLKH).

The protein resides in the nucleus. The protein is Zinc finger and BTB domain-containing protein 44 (zbtb44) of Xenopus tropicalis (Western clawed frog).